A 376-amino-acid polypeptide reads, in one-letter code: Proton extrusion protein PxcA (376 aa).

Helical transmembrane passes span 150–170 (TLISLKIILLLILVPLLVQQM), 251–271 (AVKNVLADIAALIAFAFVCII), 299–319 (IILFTDMFVGFHSPEGWQVLL), and 334–354 (FILLFIATFPVILATIFKYWI).

It belongs to the CemA family.

The protein localises to the cell inner membrane. Functionally, required for H(+) efflux immediately after light irradiation to form a rapid H(+) concentration gradient across the thylakoid membranes. Together with PxcL, contributes to transient H(+) uptake following dark to light transition. This chain is Proton extrusion protein PxcA, found in Prochlorococcus marinus (strain MIT 9303).